A 176-amino-acid polypeptide reads, in one-letter code: MKIIAKKDLFINDEIRVREVRLVGLEGEQLGIKPLSEAQSLADAANVDLVLIQPQAVPPVAKLMDYGKFKFEYQKKQKEQRKKQSVVTVKEVRLSPVIDKGDFETKLRNGRKFLEKGNKVKVSIRFKGRMITHKEIGAKVLADFAEATQDIAIIEQRAKMDGRQMFMQLAPISDKK.

This sequence belongs to the IF-3 family. In terms of assembly, monomer.

The protein resides in the cytoplasm. Functionally, IF-3 binds to the 30S ribosomal subunit and shifts the equilibrium between 70S ribosomes and their 50S and 30S subunits in favor of the free subunits, thus enhancing the availability of 30S subunits on which protein synthesis initiation begins. The sequence is that of Translation initiation factor IF-3 from Streptococcus equi subsp. zooepidemicus (strain H70).